Here is a 377-residue protein sequence, read N- to C-terminus: Subtilisin-like protease CPC735_012930 (377 aa).

The first 20 residues, 1-20 (MSILFKIFASTLAVVSVVNA), serve as a signal peptide directing secretion. The propeptide occupies 21–118 (GELLNFENER…VEPDRMASAT (98 aa)). Residues 36–114 (SYIVVMKDGT…HVKYVEPDRM (79 aa)) form the Inhibitor I9 domain. Residues 128-377 (SWGLGRISHT…NKLLYNKSGF (250 aa)) form the Peptidase S8 domain. Active-site charge relay system residues include Asp-160 and His-191. Residue Asn-252 is glycosylated (N-linked (GlcNAc...) asparagine). Ser-323 (charge relay system) is an active-site residue. Residues Asn-364 and Asn-373 are each glycosylated (N-linked (GlcNAc...) asparagine).

This sequence belongs to the peptidase S8 family.

It localises to the secreted. In terms of biological role, secreted subtilisin-like serine protease with keratinolytic activity that contributes to pathogenicity. The chain is Subtilisin-like protease CPC735_012930 from Coccidioides posadasii (strain C735) (Valley fever fungus).